A 352-amino-acid chain; its full sequence is Putative [LysW]-L-2-aminoadipate 6-phosphate reductase (352 aa).

Residue 11-14 (SGYT) coordinates NADP(+). The active site involves C148. Residue N319 participates in NADP(+) binding.

This sequence belongs to the NAGSA dehydrogenase family. Type 1 subfamily. LysY sub-subfamily.

The protein localises to the cytoplasm. It catalyses the reaction [amino-group carrier protein]-C-terminal-N-(1-carboxy-5-oxopentan-1-yl)-L-glutamine + phosphate + NADP(+) = [amino-group carrier protein]-C-terminal-N-(1-carboxy-5-phosphooxy-5-oxopentan-1-yl)-L-glutamine + NADPH + H(+). The protein operates within amino-acid biosynthesis; L-lysine biosynthesis via AAA pathway; L-lysine from L-alpha-aminoadipate (Thermus route): step 3/5. Functionally, catalyzes the NADPH-dependent reduction of [LysW]-aminoadipate 6-phosphate to yield [LysW]-aminoadipate 6-semialdehyde. This Thermomicrobium roseum (strain ATCC 27502 / DSM 5159 / P-2) protein is Putative [LysW]-L-2-aminoadipate 6-phosphate reductase.